The sequence spans 890 residues: Translation initiation factor IF-2 (890 aa).

The segment at leucine 45–proline 302 is disordered. Positions serine 67–valine 81 are enriched in polar residues. Positions valine 92 to aspartate 217 are enriched in basic and acidic residues. Residues glycine 252–asparagine 266 are compositionally biased toward basic residues. Positions lysine 267–alanine 280 are enriched in basic and acidic residues. In terms of domain architecture, tr-type G spans proline 389–lysine 558. Positions glycine 398–threonine 405 are G1. Glycine 398 to threonine 405 lines the GTP pocket. The interval glycine 423–histidine 427 is G2. The interval aspartate 444–glycine 447 is G3. Residues aspartate 444–histidine 448 and asparagine 498–aspartate 501 contribute to the GTP site. Residues asparagine 498–aspartate 501 form a G4 region. The interval serine 534–lysine 536 is G5. Lysine 808 is subject to N6-acetyllysine.

Belongs to the TRAFAC class translation factor GTPase superfamily. Classic translation factor GTPase family. IF-2 subfamily.

The protein localises to the cytoplasm. Its function is as follows. One of the essential components for the initiation of protein synthesis. Protects formylmethionyl-tRNA from spontaneous hydrolysis and promotes its binding to the 30S ribosomal subunits. Also involved in the hydrolysis of GTP during the formation of the 70S ribosomal complex. In Shigella dysenteriae serotype 1 (strain Sd197), this protein is Translation initiation factor IF-2.